The following is a 115-amino-acid chain: Large ribosomal subunit protein uL24 (115 aa).

It belongs to the universal ribosomal protein uL24 family. As to quaternary structure, part of the 50S ribosomal subunit.

Its function is as follows. One of two assembly initiator proteins, it binds directly to the 5'-end of the 23S rRNA, where it nucleates assembly of the 50S subunit. In terms of biological role, one of the proteins that surrounds the polypeptide exit tunnel on the outside of the subunit. This is Large ribosomal subunit protein uL24 from Acaryochloris marina (strain MBIC 11017).